The sequence spans 214 residues: Probable transaldolase (214 aa).

The active-site Schiff-base intermediate with substrate is the lysine 83.

Belongs to the transaldolase family. Type 3B subfamily.

The protein resides in the cytoplasm. It carries out the reaction D-sedoheptulose 7-phosphate + D-glyceraldehyde 3-phosphate = D-erythrose 4-phosphate + beta-D-fructose 6-phosphate. The protein operates within carbohydrate degradation; pentose phosphate pathway; D-glyceraldehyde 3-phosphate and beta-D-fructose 6-phosphate from D-ribose 5-phosphate and D-xylulose 5-phosphate (non-oxidative stage): step 2/3. Its function is as follows. Transaldolase is important for the balance of metabolites in the pentose-phosphate pathway. The protein is Probable transaldolase of Citrifermentans bemidjiense (strain ATCC BAA-1014 / DSM 16622 / JCM 12645 / Bem) (Geobacter bemidjiensis).